Here is a 112-residue protein sequence, read N- to C-terminus: B3 domain-containing protein At1g43171 (112 aa).

The segment at residues 19–112 is a DNA-binding region (TF-B3); it reads DIVGNVALPK…FENKFIVLNF (94 aa).

The protein resides in the nucleus. The sequence is that of B3 domain-containing protein At1g43171 from Arabidopsis thaliana (Mouse-ear cress).